The sequence spans 38 residues: Kunitz-type trypsin inhibitor beta chain (38 aa).

The protein belongs to the protease inhibitor I3 (leguminous Kunitz-type inhibitor) family. Heterodimer of an alpha and a beta chain linked by a disulfide bond.

Inhibition of trypsin. This is Kunitz-type trypsin inhibitor beta chain from Neltuma juliflora (Mesquite).